The sequence spans 397 residues: Protein PEP-RELATED DEVELOPMENT ARRESTED 1, chloroplastic (397 aa).

The transit peptide at 1 to 52 directs the protein to the chloroplast; the sequence is MLQSIHLRFSSTPSPSKRESLIIPSVICSFPFTSSSFRPKQTQKLKRLVQFC. The span at 315–334 shows a compositional bias: basic and acidic residues; sequence KDEGADNLSKEDDSSTEGRK. Residues 315 to 351 are disordered; that stretch reads KDEGADNLSKEDDSSTEGRKPSGLNGRGSVTGRKPLP.

As to quaternary structure, interacts with FSD2 and MRL7. Highly expressed in young leaves, shoots and flowers. Expressed at low levels in stems and siliques.

The protein resides in the plastid. The protein localises to the chloroplast stroma. It localises to the chloroplast nucleoid. Its function is as follows. Plays an essential role in early steps of chloroplast development. May be involved in the redox control of plastid gene expression by maintening the redox state around chloroplast nucleoids. May positively regulate plastid-encoded RNA polymerase (PEP) activity, through binding to FSD2. This is Protein PEP-RELATED DEVELOPMENT ARRESTED 1, chloroplastic (PRDA1) from Arabidopsis thaliana (Mouse-ear cress).